Here is a 330-residue protein sequence, read N- to C-terminus: Protein rlx (330 aa).

The interval 220–330 is disordered; it reads LGEDYDKGGL…EKTRGFDLEL (111 aa). Composition is skewed to basic and acidic residues over residues 237-269 and 279-330; these read NEQR…EWAR and QNRE…DLEL.

Its function is as follows. This protein is probably required for relaxation complex formation and plasmid mobilization by conjugative plasmids. This chain is Protein rlx (rlx), found in Staphylococcus aureus.